The following is a 381-amino-acid chain: Alkanesulfonate monooxygenase (381 aa).

This sequence belongs to the SsuD family. In terms of assembly, homotetramer.

It catalyses the reaction an alkanesulfonate + FMNH2 + O2 = an aldehyde + FMN + sulfite + H2O + 2 H(+). In terms of biological role, catalyzes the desulfonation of aliphatic sulfonates. In Escherichia coli O8 (strain IAI1), this protein is Alkanesulfonate monooxygenase.